A 163-amino-acid chain; its full sequence is 3-hydroxyacyl-[acyl-carrier-protein] dehydratase FabZ (163 aa).

Residue His-64 is part of the active site.

Belongs to the thioester dehydratase family. FabZ subfamily.

The protein localises to the cytoplasm. It carries out the reaction a (3R)-hydroxyacyl-[ACP] = a (2E)-enoyl-[ACP] + H2O. Involved in unsaturated fatty acids biosynthesis. Catalyzes the dehydration of short chain beta-hydroxyacyl-ACPs and long chain saturated and unsaturated beta-hydroxyacyl-ACPs. The protein is 3-hydroxyacyl-[acyl-carrier-protein] dehydratase FabZ of Caulobacter sp. (strain K31).